The chain runs to 281 residues: uncharacterized protein (281 aa).

Its subcellular location is the plastid. It localises to the chloroplast. This is an uncharacterized protein from Euglena gracilis.